The primary structure comprises 324 residues: Olfactory receptor 1L3 (324 aa).

The Extracellular portion of the chain corresponds to 1–25 (MGMSNLTRLSEFILLGLSSRSEDQR). Residue Asn5 is glycosylated (N-linked (GlcNAc...) asparagine). The chain crosses the membrane as a helical span at residues 26–49 (PLFALFLIIYLVTLMGNLLIILAI). Over 50–57 (HSDPRLQN) the chain is Cytoplasmic. A helical membrane pass occupies residues 58–79 (PMYFFLSILSFADICYTTVIVP). Residues 80-100 (KMLVNFLSEKKTISYAECLAQ) lie on the Extracellular side of the membrane. An intrachain disulfide couples Cys97 to Cys189. Residues 101-120 (MYFFLVFGNIDSYLLAAMAI) traverse the membrane as a helical segment. At 121 to 139 (NRCVAICNPFHYVTVMNRR) the chain is on the cytoplasmic side. Residues 140-158 (CCVLLLAFPITFSYFHSLL) traverse the membrane as a helical segment. Over 159 to 196 (HVLLVNRLTFCTSNVIHHFFCDVNPVLKLSCSSTFVNE) the chain is Extracellular. A helical membrane pass occupies residues 197-219 (IVAMTEGLASVMAPFVCIIISYL). Topologically, residues 220–236 (RILIAVLKIPSAAGKHK) are cytoplasmic. A helical membrane pass occupies residues 237–259 (AFSTCSSHLTVVILFYGSISYVY). Residues 260–271 (LQPLSSYTVKDR) are Extracellular-facing. A helical membrane pass occupies residues 272 to 291 (IATINYTVLTSVLNPFIYSL). Topologically, residues 292-324 (RNKDMKRGLQKLINKIKSQMSRFSTKTNKICGP) are cytoplasmic.

Belongs to the G-protein coupled receptor 1 family.

The protein resides in the cell membrane. Odorant receptor. This Homo sapiens (Human) protein is Olfactory receptor 1L3 (OR1L3).